The following is a 396-amino-acid chain: Elongation factor Tu (396 aa).

A tr-type G domain is found at 10 to 206; the sequence is KPHCNIGTIG…EVDAYIPQPE (197 aa). The tract at residues 19 to 26 is G1; sequence GHVDHGKT. A GTP-binding site is contributed by 19–26; sequence GHVDHGKT. Mg(2+) is bound at residue Thr26. Residues 60-64 are G2; sequence GITIS. Residues 81–84 form a G3 region; sequence DCPG. GTP-binding positions include 81 to 85 and 136 to 139; these read DCPGH and NKCD. A G4 region spans residues 136-139; that stretch reads NKCD. A G5 region spans residues 174 to 176; sequence SAL.

This sequence belongs to the TRAFAC class translation factor GTPase superfamily. Classic translation factor GTPase family. EF-Tu/EF-1A subfamily. In terms of assembly, monomer.

It localises to the cytoplasm. The enzyme catalyses GTP + H2O = GDP + phosphate + H(+). Its function is as follows. GTP hydrolase that promotes the GTP-dependent binding of aminoacyl-tRNA to the A-site of ribosomes during protein biosynthesis. The chain is Elongation factor Tu from Paramagnetospirillum magneticum (strain ATCC 700264 / AMB-1) (Magnetospirillum magneticum).